A 214-amino-acid chain; its full sequence is MTTLADLRINYSRASLDEADAAPDPFAQFDRWFKEALAAKLPEPNTMTLATVGADGRPSARIVLIKGVDERGFVFFTNYESRKGHDLAVHPQAALLFYWIELERQVRIEGRIEKTSAEESDRYFASRPLGSRIGAWASEQSAVIDSRATLEAREKAVSERYGDNPPRPPHWGGYRLVPDSIEFWQGRPSRLHDRLLYTRDATAAPGWTISRLSP.

Substrate is bound by residues Arg-8–Tyr-11 and Lys-66. FMN contacts are provided by residues Arg-61–Lys-66, Phe-76–Thr-77, Arg-82, Lys-83, and Gln-105. Residues Tyr-123, Arg-127, and Ser-131 each contribute to the substrate site. FMN is bound by residues Gln-140–Ser-141 and Trp-184. Residue Arg-190–His-192 coordinates substrate. Arg-194 is a binding site for FMN.

The protein belongs to the pyridoxamine 5'-phosphate oxidase family. As to quaternary structure, homodimer. FMN serves as cofactor.

The catalysed reaction is pyridoxamine 5'-phosphate + O2 + H2O = pyridoxal 5'-phosphate + H2O2 + NH4(+). It catalyses the reaction pyridoxine 5'-phosphate + O2 = pyridoxal 5'-phosphate + H2O2. It participates in cofactor metabolism; pyridoxal 5'-phosphate salvage; pyridoxal 5'-phosphate from pyridoxamine 5'-phosphate: step 1/1. It functions in the pathway cofactor metabolism; pyridoxal 5'-phosphate salvage; pyridoxal 5'-phosphate from pyridoxine 5'-phosphate: step 1/1. In terms of biological role, catalyzes the oxidation of either pyridoxine 5'-phosphate (PNP) or pyridoxamine 5'-phosphate (PMP) into pyridoxal 5'-phosphate (PLP). The polypeptide is Pyridoxine/pyridoxamine 5'-phosphate oxidase (Burkholderia orbicola (strain MC0-3)).